The following is a 541-amino-acid chain: Chaperonin GroEL 2 (541 aa).

Residues 29 to 32, 86 to 90, Gly413, 477 to 479, and Asp493 each bind ATP; these read TLGP, DGTTT, and NAA.

Belongs to the chaperonin (HSP60) family. In terms of assembly, forms a cylinder of 14 subunits composed of two heptameric rings stacked back-to-back. Interacts with the co-chaperonin GroES.

The protein localises to the cytoplasm. The catalysed reaction is ATP + H2O + a folded polypeptide = ADP + phosphate + an unfolded polypeptide.. Functionally, together with its co-chaperonin GroES, plays an essential role in assisting protein folding. The GroEL-GroES system forms a nano-cage that allows encapsulation of the non-native substrate proteins and provides a physical environment optimized to promote and accelerate protein folding. This is Chaperonin GroEL 2 from Nocardioides sp. (strain ATCC BAA-499 / JS614).